Here is a 74-residue protein sequence, read N- to C-terminus: MKLTCVLIITVLFLTACQLTTAVTYSRGEHKHRALMSTGTNYRLPKTCRSSGRYCRSPYDCCRRYCRRITDACV.

The first 22 residues, 1–22 (MKLTCVLIITVLFLTACQLTTA), serve as a signal peptide directing secretion. The propeptide occupies 23–45 (VTYSRGEHKHRALMSTGTNYRLP). Cystine bridges form between C48–C62, C55–C66, and C61–C73.

Belongs to the conotoxin O1 superfamily. In terms of tissue distribution, expressed by the venom duct.

It is found in the secreted. This is Conotoxin MiK41 from Conus miles (Soldier cone).